Here is a 301-residue protein sequence, read N- to C-terminus: 2-methylisocitrate lyase (301 aa).

53–55 is a substrate binding site; the sequence is SGA. Residues Asp-92 and Asp-94 each contribute to the Mg(2+) site. Substrate is bound by residues 129–130, Arg-162, Glu-192, 214–216, Arg-245, and Arg-274; these read CG and NMT.

It belongs to the isocitrate lyase/PEP mutase superfamily. Methylisocitrate lyase family. Mg(2+) serves as cofactor.

It catalyses the reaction 3-hydroxybutane-1,2,3-tricarboxylate = pyruvate + succinate. Functionally, involved in the methylcitric acid cycle. Catalyzes the cleavage of 2-methylisocitrate to yield pyruvate and succinate. The chain is 2-methylisocitrate lyase from Bacillus subtilis (strain 168).